Consider the following 863-residue polypeptide: DNA mismatch repair protein MutS (863 aa).

G615–S622 contacts ATP.

This sequence belongs to the DNA mismatch repair MutS family.

In terms of biological role, this protein is involved in the repair of mismatches in DNA. It is possible that it carries out the mismatch recognition step. This protein has a weak ATPase activity. In Pelotomaculum thermopropionicum (strain DSM 13744 / JCM 10971 / SI), this protein is DNA mismatch repair protein MutS.